Reading from the N-terminus, the 363-residue chain is Eukaryotic translation initiation factor 3 subunit H (363 aa).

Residues 13-163 (VQVEALVVMK…LRAFRLSTAF (151 aa)) enclose the MPN domain.

Belongs to the eIF-3 subunit H family. As to quaternary structure, component of the eukaryotic translation initiation factor 3 (eIF-3) complex.

Its subcellular location is the cytoplasm. Component of the eukaryotic translation initiation factor 3 (eIF-3) complex, which is involved in protein synthesis of a specialized repertoire of mRNAs and, together with other initiation factors, stimulates binding of mRNA and methionyl-tRNAi to the 40S ribosome. The eIF-3 complex specifically targets and initiates translation of a subset of mRNAs involved in cell proliferation. The chain is Eukaryotic translation initiation factor 3 subunit H from Pyricularia oryzae (strain 70-15 / ATCC MYA-4617 / FGSC 8958) (Rice blast fungus).